A 479-amino-acid chain; its full sequence is Protein phosphatase 1B (479 aa).

Residues 1–14 (MGAFLDKPKTEKHN) show a composition bias toward basic and acidic residues. Residues 1–20 (MGAFLDKPKTEKHNAHGAGN) form a disordered region. The N-myristoyl glycine moiety is linked to residue G2. Residue K12 forms a Glycyl lysine isopeptide (Lys-Gly) (interchain with G-Cter in ISG15) linkage. The region spanning 23–295 (RYGLSSMQGW…DNMSIVLVCF (273 aa)) is the PPM-type phosphatase domain. Mn(2+) contacts are provided by D60 and G61. Residue K142 forms a Glycyl lysine isopeptide (Lys-Gly) (interchain with G-Cter in ISG15) linkage. The Mn(2+) site is built by D243 and D286. S386 is subject to Phosphoserine. Positions 423-479 (VEGEESPAEPAATATSSNSDAGNPVTMQESHTESESGLAELDSSNEDAGTKMSGEKI) are disordered. Residues 430 to 439 (AEPAATATSS) are compositionally biased toward low complexity. Residues 440–451 (NSDAGNPVTMQE) are compositionally biased toward polar residues.

Belongs to the PP2C family. Monomer. Interacts with PAK6. Interacts with the phosphorylated form of IKBKB/IKKB. It depends on Mg(2+) as a cofactor. Requires Mn(2+) as cofactor. Isgylation negatively regulates its activity. In terms of processing, N-myristoylation is essential for the recognition of its substrates for dephosphorylation. In terms of tissue distribution, highly expressed in heart and skeletal muscle.

Its subcellular location is the cytoplasm. It localises to the cytosol. The protein localises to the membrane. The enzyme catalyses O-phospho-L-seryl-[protein] + H2O = L-seryl-[protein] + phosphate. The catalysed reaction is O-phospho-L-threonyl-[protein] + H2O = L-threonyl-[protein] + phosphate. Enzyme with a broad specificity. Dephosphorylates CDK2 and CDK6 in vitro. Dephosphorylates PRKAA1 and PRKAA2. Inhibits TBK1-mediated antiviral signaling by dephosphorylating it at 'Ser-172'. Plays an important role in the termination of TNF-alpha-mediated NF-kappa-B activation through dephosphorylating and inactivating IKBKB/IKKB. The protein is Protein phosphatase 1B (PPM1B) of Homo sapiens (Human).